Reading from the N-terminus, the 131-residue chain is Chromatin accessibility complex protein 1 (131 aa).

The residue at position 2 (A2) is an N-acetylalanine. Residues 100 to 124 (ASKYLKMLKEEKREEDEENDNDNES) adopt a coiled-coil conformation. N6-acetyllysine is present on K102. The tract at residues 109–131 (EEKREEDEENDNDNESDHDEADS) is disordered. Over residues 112–131 (REEDEENDNDNESDHDEADS) the composition is skewed to acidic residues. S124 bears the Phosphoserine mark.

As to quaternary structure, heterodimer with POLE3; binds to DNA. Component of the CHRAC ISWI chromatin remodeling complex at least composed of SMARCA5/SNF2H, BAZ1A/ACF1, CHRAC1 and POLE3; the complex preferentially binds DNA through the CHRAC1-POLE3 heterodimer and possesses ATP-dependent nucleosome-remodeling activity. Within the complex, the heterodimer with POLE3 interacts with SMARCA5/SNF2H; the interaction is direct and enhances nucleosome sliding activity by the SMARCA5/SNF2H and BAZ1A/ACF1 interaction. Within the complex, the heterodimer with POLE3 interacts with BAZ1A/ACF1; the interactions are direct. In terms of tissue distribution, expressed in heart, brain, placenta, lung, liver, skeletal muscle, kidney and pancreas.

It is found in the nucleus. In terms of biological role, forms a complex with DNA polymerase epsilon subunit POLE3 and binds naked DNA, which is then incorporated into chromatin, aided by the nucleosome remodeling activity of ISWI/SNF2H and ACF1. Does not enhance nucleosome sliding activity of the ACF-5 ISWI chromatin remodeling complex. In Homo sapiens (Human), this protein is Chromatin accessibility complex protein 1 (CHRAC1).